The chain runs to 251 residues: tRNA-cytidine(32) 2-sulfurtransferase 1 (251 aa).

The PP-loop motif signature appears at 33–38 (SGGKDS). C108, C111, and C199 together coordinate [4Fe-4S] cluster.

This sequence belongs to the TtcA family. As to quaternary structure, homodimer. Mg(2+) is required as a cofactor. [4Fe-4S] cluster serves as cofactor.

Its subcellular location is the cytoplasm. It catalyses the reaction cytidine(32) in tRNA + S-sulfanyl-L-cysteinyl-[cysteine desulfurase] + AH2 + ATP = 2-thiocytidine(32) in tRNA + L-cysteinyl-[cysteine desulfurase] + A + AMP + diphosphate + H(+). The protein operates within tRNA modification. Functionally, catalyzes the ATP-dependent 2-thiolation of cytidine in position 32 of tRNA, to form 2-thiocytidine (s(2)C32). The sulfur atoms are provided by the cysteine/cysteine desulfurase (IscS) system. The chain is tRNA-cytidine(32) 2-sulfurtransferase 1 from Francisella tularensis subsp. holarctica (strain FTNF002-00 / FTA).